Here is a 541-residue protein sequence, read N- to C-terminus: DNA polymerase epsilon subunit B (541 aa).

The protein belongs to the DNA polymerase epsilon subunit B family. Heterotetramer. Consists of four subunits: POL2, DPB2, DPB3 and DPB4.

Its subcellular location is the nucleus. Its function is as follows. As accessory component of the DNA polymerase epsilon (DNA polymerase II) participates in chromosomal DNA replication. The sequence is that of DNA polymerase epsilon subunit B (DPB2) from Cryptococcus neoformans var. neoformans serotype D (strain B-3501A) (Filobasidiella neoformans).